A 225-amino-acid chain; its full sequence is Ribonuclease HII (225 aa).

An RNase H type-2 domain is found at 28–220 (DIIAGTDEVG…VKEYVDISQE (193 aa)). Aspartate 34, glutamate 35, and aspartate 129 together coordinate a divalent metal cation.

Belongs to the RNase HII family. Mn(2+) serves as cofactor. It depends on Mg(2+) as a cofactor.

Its subcellular location is the cytoplasm. The enzyme catalyses Endonucleolytic cleavage to 5'-phosphomonoester.. Functionally, endonuclease that specifically degrades the RNA of RNA-DNA hybrids. The chain is Ribonuclease HII from Desulfotalea psychrophila (strain LSv54 / DSM 12343).